A 381-amino-acid chain; its full sequence is E3 ubiquitin-protein ligase RNF13 (381 aa).

Residues 1–34 form the signal peptide; sequence MLLSIGMLMLSATQVYTILTVQLFAFLNLLPVEA. The Lumenal portion of the chain corresponds to 35–182; sequence DILAYNFENA…VPEFSLPLEY (148 aa). Residues 65-160 form the PA domain; it reads KGFLINSKPE…GESSANSLKD (96 aa). Asn88 is a glycosylation site (N-linked (GlcNAc...) asparagine). A helical transmembrane segment spans residues 183–203; the sequence is YLIPFLIIVGICLILIVIFMI. The Cytoplasmic portion of the chain corresponds to 204 to 381; the sequence is TKFVQDRHRA…ERDYNIANTV (178 aa). The segment at 240-282 adopts an RING-type; atypical zinc-finger fold; sequence CAICLDEYEDGDKLRILPCSHAYHCKCVDPWLTKTKKTCPVCK. Residues 285-381 are disordered; it reads VVPSQGDSDS…ERDYNIANTV (97 aa). Composition is skewed to acidic residues over residues 292-304 and 339-357; these read SDSD…EENE and SDYE…AENE.

As to quaternary structure, interacts with ERN1. Autoubiquitinated. Widely expressed (at protein level). In normal pancreas, expressed in islets, but not in ducts, nor in acini (at protein level).

The protein resides in the endoplasmic reticulum membrane. The protein localises to the late endosome membrane. Its subcellular location is the lysosome membrane. It localises to the nucleus inner membrane. The enzyme catalyses S-ubiquitinyl-[E2 ubiquitin-conjugating enzyme]-L-cysteine + [acceptor protein]-L-lysine = [E2 ubiquitin-conjugating enzyme]-L-cysteine + N(6)-ubiquitinyl-[acceptor protein]-L-lysine.. It participates in protein modification; protein ubiquitination. Its function is as follows. E3 ubiquitin-protein ligase that regulates cell proliferation. Involved in apoptosis regulation. Mediates ER stress-induced activation of JNK signaling pathway and apoptosis by promoting ERN1 activation and splicing of XBP1 mRNA. Also involved in protein trafficking and localization. This is E3 ubiquitin-protein ligase RNF13 from Homo sapiens (Human).